We begin with the raw amino-acid sequence, 501 residues long: Aldehyde dehydrogenase 1A1 (501 aa).

Ser-2 carries the post-translational modification N-acetylserine. N6-acetyllysine occurs at positions 91 and 128. NAD(+) is bound by residues 167-170 (IPWN), 193-196 (KPAE), 226-227 (GP), and 246-247 (GS). N6-acetyllysine is present on Lys-252. The active-site Proton acceptor is Glu-269. An NAD(+)-binding site is contributed by 269–271 (ELG). Cys-303 serves as the catalytic Nucleophile. Positions 336 to 501 (LTPGVTQGPQ…VTVKISQKNS (166 aa)) are mediates interaction with PRMT3. The residue at position 337 (Thr-337) is a Phosphothreonine. NAD(+) is bound at residue 349-353 (EQYDK). An N6-acetyllysine mark is found at Lys-353 and Lys-367. Residue 400–402 (EIF) coordinates NAD(+). Residue Lys-410 is modified to N6-acetyllysine. Ser-413 is modified (phosphoserine). Residues Lys-419, Lys-435, and Lys-495 each carry the N6-acetyllysine modification.

The protein belongs to the aldehyde dehydrogenase family. As to quaternary structure, homotetramer. Interacts with PRMT3; the interaction is direct, inhibits ALDH1A1 aldehyde dehydrogenase activity and is independent of the methyltransferase activity of PRMT3. The N-terminus is blocked most probably by acetylation. As to expression, expressed by erythrocytes (at protein level).

It is found in the cytoplasm. Its subcellular location is the cytosol. It localises to the cell projection. The protein localises to the axon. It carries out the reaction an aldehyde + NAD(+) + H2O = a carboxylate + NADH + 2 H(+). It catalyses the reaction all-trans-retinal + NAD(+) + H2O = all-trans-retinoate + NADH + 2 H(+). The enzyme catalyses 9-cis-retinal + NAD(+) + H2O = 9-cis-retinoate + NADH + 2 H(+). The catalysed reaction is 11-cis-retinal + NAD(+) + H2O = 11-cis-retinoate + NADH + 2 H(+). It carries out the reaction 13-cis-retinal + NAD(+) + H2O = 13-cis-retinoate + NADH + 2 H(+). It catalyses the reaction 3-deoxyglucosone + NAD(+) + H2O = 2-dehydro-3-deoxy-D-gluconate + NADH + 2 H(+). The enzyme catalyses (E)-4-hydroxynon-2-enal + NAD(+) + H2O = (E)-4-hydroxynon-2-enoate + NADH + 2 H(+). The catalysed reaction is malonaldehyde + NAD(+) + H2O = 3-oxopropanoate + NADH + 2 H(+). It carries out the reaction hexanal + NAD(+) + H2O = hexanoate + NADH + 2 H(+). It catalyses the reaction propanal + NAD(+) + H2O = propanoate + NADH + 2 H(+). The enzyme catalyses acetaldehyde + NAD(+) + H2O = acetate + NADH + 2 H(+). The catalysed reaction is benzaldehyde + NAD(+) + H2O = benzoate + NADH + 2 H(+). It carries out the reaction 4-aminobutanal + NAD(+) + H2O = 4-aminobutanoate + NADH + 2 H(+). It participates in cofactor metabolism; retinol metabolism. Its activity is regulated as follows. Inhibited by citral, disulfiram, and cyanamide. Activated by diethylstilbestrol. Inhibited by duocarmycin analogs. Its function is as follows. Cytosolic dehydrogenase that catalyzes the irreversible oxidation of a wide range of aldehydes to their corresponding carboxylic acid. Functions downstream of retinol dehydrogenases and catalyzes the oxidation of retinaldehyde into retinoic acid, the second step in the oxidation of retinol/vitamin A into retinoic acid. This pathway is crucial to control the levels of retinol and retinoic acid, two important molecules which excess can be teratogenic and cytotoxic. Also oxidizes aldehydes resulting from lipid peroxidation like (E)-4-hydroxynon-2-enal/HNE, malonaldehyde and hexanal that form protein adducts and are highly cytotoxic. By participating for instance to the clearance of (E)-4-hydroxynon-2-enal/HNE in the lens epithelium prevents the formation of HNE-protein adducts and lens opacification. Also functions downstream of fructosamine-3-kinase in the fructosamine degradation pathway by catalyzing the oxidation of 3-deoxyglucosone, the carbohydrate product of fructosamine 3-phosphate decomposition, which is itself a potent glycating agent that may react with lysine and arginine side-chains of proteins. Also has an aminobutyraldehyde dehydrogenase activity and is probably part of an alternative pathway for the biosynthesis of GABA/4-aminobutanoate in midbrain, thereby playing a role in GABAergic synaptic transmission. This chain is Aldehyde dehydrogenase 1A1, found in Homo sapiens (Human).